The primary structure comprises 334 residues: Serine/threonine-protein kinase SAPK3 (334 aa).

The region spanning 5–261 (YEALKELGAG…IPEIKKHTWF (257 aa)) is the Protein kinase domain. Residues 11–19 (LGAGNFGVA) and lysine 34 each bind ATP. Aspartate 124 functions as the Proton acceptor in the catalytic mechanism.

This sequence belongs to the protein kinase superfamily. Ser/Thr protein kinase family. Post-translationally, autophosphorylated in presence of Ca(2+). In terms of tissue distribution, expressed in leaves and maturing seeds, but not in roots and stems of field-grown plants.

It is found in the cytoplasm. It localises to the nucleus. The catalysed reaction is L-seryl-[protein] + ATP = O-phospho-L-seryl-[protein] + ADP + H(+). The enzyme catalyses L-threonyl-[protein] + ATP = O-phospho-L-threonyl-[protein] + ADP + H(+). Its activity is regulated as follows. Activated by phosphorylation. Its function is as follows. May play a role in signal transduction of hyperosmotic response. The protein is Serine/threonine-protein kinase SAPK3 (SAPK3) of Oryza sativa subsp. indica (Rice).